Here is an 879-residue protein sequence, read N- to C-terminus: uncharacterized protein (879 aa).

Residues 14 to 34 (LAFFGCGVSVGAFFTLFLMGT) traverse the membrane as a helical segment.

It is found in the membrane. This is an uncharacterized protein from Mycoplasma pneumoniae (strain ATCC 29342 / M129 / Subtype 1) (Mycoplasmoides pneumoniae).